Here is a 429-residue protein sequence, read N- to C-terminus: Cell wall protein ECM33 (429 aa).

The N-terminal stretch at 1–19 (MQFKNALTATAILSASALA) is a signal peptide. Residues Asn21, Asn56, Asn82, Asn196, Asn209, Asn227, Asn234, Asn241, Asn267, Asn279, Asn304, and Asn328 are each glycosylated (N-linked (GlcNAc...) asparagine). A Phosphoserine modification is found at Ser339. Residues 361 to 401 (LSSTSTESSKSSATSSASSSGDASNAQANVSASASSSSSSS) show a composition bias toward low complexity. The segment at 361–410 (LSSTSTESSKSSATSSASSSGDASNAQANVSASASSSSSSSKKSKGAAPE) is disordered. Asn389 carries an N-linked (GlcNAc...) asparagine glycan. Gly406 carries the GPI-anchor amidated glycine lipid modification. The propeptide at 407–429 (AAPELVPATSFMGVVAAVAVALL) is removed in mature form.

The protein belongs to the SPS2 family. Post-translationally, the GPI-anchor is attached to the protein in the endoplasmic reticulum and serves to target the protein to the cell surface. There, the glucosamine-inositol phospholipid moiety is cleaved off and the GPI-modified mannoprotein is covalently attached via its lipidless GPI glycan remnant to the 1,6-beta-glucan of the outer cell wall layer.

It localises to the cell membrane. The protein localises to the secreted. It is found in the cell wall. Functionally, required for proper cell wall integrity and for the correct assembly of the mannoprotein outer layer of the cell wall. Important for apical bud growth. This is Cell wall protein ECM33 (ECM33) from Saccharomyces cerevisiae (strain AWRI1631) (Baker's yeast).